Consider the following 232-residue polypeptide: Ribose-5-phosphate isomerase A (232 aa).

Substrate is bound by residues 29–32 (SGST), 86–89 (DGAD), and 99–102 (KGGG). The Proton acceptor role is filled by E108. K126 provides a ligand contact to substrate.

Belongs to the ribose 5-phosphate isomerase family. Homodimer.

The enzyme catalyses aldehydo-D-ribose 5-phosphate = D-ribulose 5-phosphate. The protein operates within carbohydrate degradation; pentose phosphate pathway; D-ribose 5-phosphate from D-ribulose 5-phosphate (non-oxidative stage): step 1/1. In terms of biological role, catalyzes the reversible conversion of ribose-5-phosphate to ribulose 5-phosphate. The sequence is that of Ribose-5-phosphate isomerase A from Synechococcus sp. (strain ATCC 27144 / PCC 6301 / SAUG 1402/1) (Anacystis nidulans).